The primary structure comprises 615 residues: MFS-type transporter 1 (615 aa).

Positions 1-85 are disordered; it reads MTALAAVPDL…GNNVSPHGRH (85 aa). Positions 16–53 are enriched in polar residues; the sequence is PSTTTVHSPNYSGSPADISSSPTTRAVSRNTARQTASA. The N-linked (GlcNAc...) asparagine glycan is linked to asparagine 25. 6 consecutive transmembrane segments (helical) span residues 94 to 114, 138 to 158, 162 to 182, 192 to 212, 222 to 242, and 251 to 271; these read CLVI…SGIL, VYSL…HIIG, VWIT…RSAT, VLGV…TNGF, FAFQ…LGGI, and FGFY…LVVL. An N-linked (GlcNAc...) asparagine glycan is attached at asparagine 302. A run of 8 helical transmembrane segments spans residues 320–340, 351–371, 397–417, 432–452, 455–475, 488–508, 522–542, and 585–605; these read WTGT…FSVV, QNIA…LWVG, AAVF…ALYF, FLPM…LVET, VRWL…IMAL, FAML…NLII, AVFN…TAVV, and AAFW…FLGL.

The protein belongs to the major facilitator superfamily. EmrB family.

The protein localises to the membrane. Functionally, MFS-type transporter; part of the gene cluster that mediates the biosynthesis of pyriculol and pyriculariol, two heptaketides that induce lesion formation upon application on rice leaves but are dispensable for pathogenicity. With the ABC transporter ABC7, is most likely responsible for pyriculol and pyriculariol secretion and thereby may contribute to intrinsic resistance. The chain is MFS-type transporter 1 from Pyricularia oryzae (strain 70-15 / ATCC MYA-4617 / FGSC 8958) (Rice blast fungus).